The sequence spans 200 residues: Ribonuclease HII (200 aa).

An RNase H type-2 domain is found at 14–200 (SRLAGVDEVG…FAPVKQWQLL (187 aa)). 3 residues coordinate a divalent metal cation: Asp-20, Glu-21, and Asp-112.

It belongs to the RNase HII family. The cofactor is Mn(2+). It depends on Mg(2+) as a cofactor.

Its subcellular location is the cytoplasm. It carries out the reaction Endonucleolytic cleavage to 5'-phosphomonoester.. In terms of biological role, endonuclease that specifically degrades the RNA of RNA-DNA hybrids. The protein is Ribonuclease HII of Chromohalobacter salexigens (strain ATCC BAA-138 / DSM 3043 / CIP 106854 / NCIMB 13768 / 1H11).